Reading from the N-terminus, the 88-residue chain is L-amino-acid oxidase (88 aa).

FAD is bound by residues E74 and 81 to 86 (GWIDST). Residue 81–82 (GW) coordinates substrate.

This sequence belongs to the flavin monoamine oxidase family. FIG1 subfamily. In terms of assembly, homodimer; non-covalently linked. Requires FAD as cofactor. In terms of processing, N-glycosylated. Expressed by the venom gland.

Its subcellular location is the secreted. It carries out the reaction an L-alpha-amino acid + O2 + H2O = a 2-oxocarboxylate + H2O2 + NH4(+). The catalysed reaction is L-leucine + O2 + H2O = 4-methyl-2-oxopentanoate + H2O2 + NH4(+). The enzyme catalyses L-phenylalanine + O2 + H2O = 3-phenylpyruvate + H2O2 + NH4(+). It catalyses the reaction L-tryptophan + O2 + H2O = indole-3-pyruvate + H2O2 + NH4(+). It carries out the reaction L-methionine + O2 + H2O = 4-methylsulfanyl-2-oxobutanoate + H2O2 + NH4(+). The catalysed reaction is L-isoleucine + O2 + H2O = (S)-3-methyl-2-oxopentanoate + H2O2 + NH4(+). The enzyme catalyses L-arginine + O2 + H2O = 5-guanidino-2-oxopentanoate + H2O2 + NH4(+). It catalyses the reaction L-histidine + O2 + H2O = 3-(imidazol-5-yl)pyruvate + H2O2 + NH4(+). It carries out the reaction L-asparagine + O2 + H2O = 2-oxosuccinamate + H2O2 + NH4(+). The catalysed reaction is L-valine + O2 + H2O = 3-methyl-2-oxobutanoate + H2O2 + NH4(+). The enzyme catalyses L-glutamate + O2 + H2O = H2O2 + 2-oxoglutarate + NH4(+). Catalyzes an oxidative deamination of predominantly hydrophobic and aromatic L-amino acids, thus producing hydrogen peroxide that may contribute to the diverse toxic effects of this enzyme. Is highly active on L-Met, L-Leu, L-Phe, L-Ile, and L-Arg, moderately active on L-His, L-Trp, L-Asn, L-Glu, and L-Val, and weakly or not active on L-Gln, L-Lys, L-Asp, L-Ala, L-Tyr, L-Ser, L-Pro, L-Gly, L-Thr, and L-Cys. Exhibits diverse biological activities, such as hemorrhage, hemolysis, edema, apoptosis of vascular endothelial cells or tumor cell lines, antibacterial and antiparasitic activities. In addition, this protein has an ability to induce apoptosis in cultured HeLa and K562 cells, and inhibits ADP-induced platelet aggregation dose-dependently. Effects of snake L-amino oxidases on platelets are controversial, since they either induce aggregation or inhibit agonist-induced aggregation. These different effects are probably due to different experimental conditions. The chain is L-amino-acid oxidase from Vipera berus berus (Common viper).